Here is a 156-residue protein sequence, read N- to C-terminus: 6,7-dimethyl-8-ribityllumazine synthase (156 aa).

5-amino-6-(D-ribitylamino)uracil is bound by residues phenylalanine 22, 57–59 (AYE), and 81–83 (TVI). 86–87 (GT) contributes to the (2S)-2-hydroxy-3-oxobutyl phosphate binding site. Histidine 89 serves as the catalytic Proton donor. Phenylalanine 114 contacts 5-amino-6-(D-ribitylamino)uracil. Arginine 128 serves as a coordination point for (2S)-2-hydroxy-3-oxobutyl phosphate.

Belongs to the DMRL synthase family. In terms of assembly, forms an icosahedral capsid composed of 60 subunits, arranged as a dodecamer of pentamers.

The enzyme catalyses (2S)-2-hydroxy-3-oxobutyl phosphate + 5-amino-6-(D-ribitylamino)uracil = 6,7-dimethyl-8-(1-D-ribityl)lumazine + phosphate + 2 H2O + H(+). It functions in the pathway cofactor biosynthesis; riboflavin biosynthesis; riboflavin from 2-hydroxy-3-oxobutyl phosphate and 5-amino-6-(D-ribitylamino)uracil: step 1/2. Catalyzes the formation of 6,7-dimethyl-8-ribityllumazine by condensation of 5-amino-6-(D-ribitylamino)uracil with 3,4-dihydroxy-2-butanone 4-phosphate. This is the penultimate step in the biosynthesis of riboflavin. This Proteus mirabilis (strain HI4320) protein is 6,7-dimethyl-8-ribityllumazine synthase.